Consider the following 452-residue polypeptide: MSLFTHVLACLFGIGSWVAINGMWVELPLIVTAIPEGWLLPSYLTIIIQMANIGPLFITLMHRFRPGVLDERPVIYTIVAVGVVATFLLAFLWKHTLTFGDGEHSAALLSLSFLLSVVDCTSSVTFLPFMMRLQPQYLTTYFIGEGLSGLVPALVALVQGVGVVHCKNASANANFSLGNISQSLLETHYQPANFSTQGFFLFLSAMMMVCLGAFLLLNLHPAVAREHKSMKGYIDDSRRVEKIDLSQSPNDETPEQRPMLDFPEGSAIKQRSSFGKGTYSRTELVFIFVVLAWVNALTNAVLPSVQSYSCLPYGNQAYHLAATLSSVANPVACFIAMFVPIRSLVLMGVLTVTGTGFGAYIMAMAALSPCPLLINDDLGAALIVITWVIFVLSLSYVKVIIGVILRDEGHSALVWCGAVVQLGSMLGALSMFPLISVYRLFQSGDPCNTKCP.

Transmembrane regions (helical) follow at residues 11-31 (LFGI…PLIV), 38-58 (WLLP…PLFI), 73-93 (PVIY…AFLW), 111-131 (LSFL…PFMM), and 138-158 (LTTY…VALV). Asn-168, Asn-174, Asn-179, and Asn-193 each carry an N-linked (GlcNAc...) asparagine glycan. The next 6 helical transmembrane spans lie at 199-219 (FFLF…LLNL), 285-305 (VFIF…LPSV), 321-341 (AATL…FVPI), 344-364 (LVLM…IMAM), 381-401 (ALIV…KVII), and 412-432 (ALVW…LSMF).

Belongs to the riboflavin transporter family.

The protein resides in the cell membrane. The enzyme catalyses riboflavin(in) = riboflavin(out). Its function is as follows. Plasma membrane transporter mediating the uptake by cells of the water soluble vitamin B2/riboflavin that plays a key role in biochemical oxidation-reduction reactions of the carbohydrate, lipid, and amino acid metabolism. The chain is Solute carrier family 52, riboflavin transporter, member 3-B (slc52a3b) from Danio rerio (Zebrafish).